A 1298-amino-acid chain; its full sequence is Phosphoribosylformylglycinamidine synthase (1298 aa).

The tract at residues 301 to 328 is disordered; the sequence is APFPGASTGSGGEIRDEGATGRGAKPKA. Residues 305-316, 384-386, and alanine 676 contribute to the ATP site; these read GASTGSGGEIRD and TGY. The Mg(2+) site is built by aspartate 677, glutamate 716, asparagine 720, and aspartate 884. Serine 886 contributes to the ATP binding site. Residues 1045–1298 enclose the Glutamine amidotransferase type-1 domain; that stretch reads VAVLREQGVN…MFRNARVWVN (254 aa). Catalysis depends on cysteine 1138, which acts as the Nucleophile. Residues histidine 1263 and glutamate 1265 contribute to the active site.

It in the N-terminal section; belongs to the FGAMS family. In terms of assembly, monomer.

Its subcellular location is the cytoplasm. It catalyses the reaction N(2)-formyl-N(1)-(5-phospho-beta-D-ribosyl)glycinamide + L-glutamine + ATP + H2O = 2-formamido-N(1)-(5-O-phospho-beta-D-ribosyl)acetamidine + L-glutamate + ADP + phosphate + H(+). It functions in the pathway purine metabolism; IMP biosynthesis via de novo pathway; 5-amino-1-(5-phospho-D-ribosyl)imidazole from N(2)-formyl-N(1)-(5-phospho-D-ribosyl)glycinamide: step 1/2. Functionally, phosphoribosylformylglycinamidine synthase involved in the purines biosynthetic pathway. Catalyzes the ATP-dependent conversion of formylglycinamide ribonucleotide (FGAR) and glutamine to yield formylglycinamidine ribonucleotide (FGAM) and glutamate. In Pseudomonas fluorescens (strain Pf0-1), this protein is Phosphoribosylformylglycinamidine synthase.